The following is a 316-amino-acid chain: Malate dehydrogenase 2 (316 aa).

Residues 10–15 (GGGQIG) and Asp-34 each bind NAD(+). Substrate-binding residues include Arg-83 and Arg-89. NAD(+)-binding positions include Asn-96 and 119-121 (ISN). Residues Asn-121 and Arg-152 each coordinate substrate. His-176 functions as the Proton acceptor in the catalytic mechanism.

It belongs to the LDH/MDH superfamily. MDH type 3 family.

It carries out the reaction (S)-malate + NAD(+) = oxaloacetate + NADH + H(+). Its function is as follows. Catalyzes the reversible oxidation of malate to oxaloacetate. The polypeptide is Malate dehydrogenase 2 (Anaeromyxobacter dehalogenans (strain 2CP-C)).